The sequence spans 130 residues: Mediator of RNA polymerase II transcription subunit 10 (130 aa).

The protein belongs to the Mediator complex subunit 10 family. In terms of assembly, component of the Mediator complex.

The protein resides in the nucleus. Functionally, component of the Mediator complex, a coactivator involved in the regulated transcription of nearly all RNA polymerase II-dependent genes. Mediator functions as a bridge to convey information from gene-specific regulatory proteins to the basal RNA polymerase II transcription machinery. Mediator is recruited to promoters by direct interactions with regulatory proteins and serves as a scaffold for the assembly of a functional preinitiation complex with RNA polymerase II and the general transcription factors. The protein is Mediator of RNA polymerase II transcription subunit 10 (MED10) of Anopheles gambiae (African malaria mosquito).